Here is a 282-residue protein sequence, read N- to C-terminus: Pantothenate synthetase (282 aa).

26 to 33 is an ATP binding site; it reads MGNLHEGH. His-33 acts as the Proton donor in catalysis. Gln-57 serves as a coordination point for (R)-pantoate. Gln-57 contacts beta-alanine. 144-147 is a binding site for ATP; that stretch reads GQKD. A (R)-pantoate-binding site is contributed by Gln-150. ATP is bound by residues Leu-173 and 181–184; that span reads LSSR.

The protein belongs to the pantothenate synthetase family. Homodimer.

The protein localises to the cytoplasm. It catalyses the reaction (R)-pantoate + beta-alanine + ATP = (R)-pantothenate + AMP + diphosphate + H(+). The protein operates within cofactor biosynthesis; (R)-pantothenate biosynthesis; (R)-pantothenate from (R)-pantoate and beta-alanine: step 1/1. Its function is as follows. Catalyzes the condensation of pantoate with beta-alanine in an ATP-dependent reaction via a pantoyl-adenylate intermediate. The protein is Pantothenate synthetase of Albidiferax ferrireducens (strain ATCC BAA-621 / DSM 15236 / T118) (Rhodoferax ferrireducens).